We begin with the raw amino-acid sequence, 317 residues long: Uridine phosphorylase 2 (317 aa).

Residues glycine 66, arginine 100, and arginine 144 to threonine 147 each bind phosphate. Residues cysteine 95 and cysteine 102 are joined by a disulfide bond. Uridine-binding positions include serine 148–glycine 149 and glutamine 223–arginine 225.

The protein belongs to the PNP/UDP phosphorylase family. As to quaternary structure, homodimer. In terms of tissue distribution, predominantly expressed in kidney.

The enzyme catalyses uridine + phosphate = alpha-D-ribose 1-phosphate + uracil. It carries out the reaction 2'-deoxyuridine + phosphate = 2-deoxy-alpha-D-ribose 1-phosphate + uracil. The protein operates within pyrimidine metabolism; UMP biosynthesis via salvage pathway; uracil from uridine (phosphorylase route): step 1/1. With respect to regulation, a conditional disulfide bridge can form within the protein that dislocates a critical phosphate-coordinating arginine Arg-100 away from the active site, disabling the enzyme. Catalyzes the reversible phosphorylytic cleavage of uridine to uracil and ribose-1-phosphate which can then be utilized as carbon and energy sources or in the rescue of pyrimidine bases for nucleotide synthesis. Shows broad substrate specificity and can also accept deoxyuridine and other analogous compounds. The chain is Uridine phosphorylase 2 from Homo sapiens (Human).